The chain runs to 339 residues: MDETVAEFIKRTILKIPMNELTTILKAWDFLSENQLQTVNFRQRKESVVQHLIHLCEEKRASISDAALLDIIYMQFHQHQKVWEVFQMSKGPGEDVDLFDMKQFKNSFKKILQRALKNVTVSFRETEENAVWIRIAWGTQYTKPNQYKPTYVVYYSQTPYAFTSSSMLRRNTPLLGQALTIASKHHQIVKMDLRSRYLDSLKAIVFKQYNQTFETHNSTTPLQERSLGLDINMDSRIIHENIVEKERVQRITQETFGDYPQPQLEFAQYKLETKFKSGLNGSILAEREEPLRCLIKFSSPHLLEALKSLAPAGIADAPLSPLLTCIPNKRMNYFKIRDK.

Phosphoserine is present on residues S226, S235, and S282.

Belongs to the CENP-N/CHL4 family. Component of the CENPA-NAC complex, at least composed of CENPA, CENPC, CENPH, CENPM, CENPN, CENPT and CENPU. The CENPA-NAC complex interacts with the CENPA-CAD complex, composed of CENPI, CENPK, CENPL, CENPO, CENPP, CENPQ, CENPR and CENPS. Interacts directly with CENPA. Identified in a centromere complex containing histones H2A, H2B and H4, and at least CENPA, CENPB, CENPC, CENPT, CENPN, HJURP, SUPT16H, SSRP1 and RSF1.

The protein localises to the nucleus. Its subcellular location is the chromosome. The protein resides in the centromere. It is found in the kinetochore. In terms of biological role, component of the CENPA-NAC (nucleosome-associated) complex, a complex that plays a central role in assembly of kinetochore proteins, mitotic progression and chromosome segregation. The CENPA-NAC complex recruits the CENPA-CAD (nucleosome distal) complex and may be involved in incorporation of newly synthesized CENPA into centromeres. CENPN is the first protein to bind specifically to CENPA nucleosomes and the direct binding of CENPA nucleosomes by CENPN is required for centromere assembly. Required for chromosome congression and efficiently align the chromosomes on a metaphase plate. In Homo sapiens (Human), this protein is Centromere protein N (CENPN).